A 306-amino-acid chain; its full sequence is Non-specific ribonucleoside hydrolase RihC (306 aa).

Histidine 235 is an active-site residue.

It belongs to the IUNH family. RihC subfamily.

In terms of biological role, hydrolyzes both purine and pyrimidine ribonucleosides with a broad-substrate specificity. The sequence is that of Non-specific ribonucleoside hydrolase RihC from Salmonella dublin (strain CT_02021853).